We begin with the raw amino-acid sequence, 569 residues long: Rab GTPase-binding effector protein 2 (569 aa).

Disordered stretches follow at residues 1–41 (MAAA…GELS), 180–265 (IQRR…ETAS), and 388–411 (RAEQ…ESLP). At Ala2 the chain carries N-acetylalanine. Residues 34 to 187 (EAESGELSRL…QEIQRRPRHA (154 aa)) adopt a coiled-coil conformation. 2 positions are modified to phosphoserine: Ser189 and Ser193. Ser200 is modified (phosphoserine; by GSK3-alpha). Ser204 carries the phosphoserine modification. Composition is skewed to low complexity over residues 245–257 (SSSS…QGLS) and 393–403 (PSSAPQGSQQE). Residues 289–523 (DTQWEQLQTE…LQAELETSEQ (235 aa)) are a coiled coil.

Belongs to the rabaptin family. As to quaternary structure, heterodimer with RABGEF1. The dimer binds RAB5A that has been activated by GTP-binding. Interacts with SDCCAG8; this interaction is important for ciliogenesis regulation. Interacts with RAB4A; this interaction may mediate VEGFR2 cell surface expression.

Its subcellular location is the cytoplasm. It is found in the early endosome. The protein localises to the cytoskeleton. The protein resides in the microtubule organizing center. It localises to the centrosome. Its subcellular location is the cilium basal body. Its function is as follows. Plays a role in membrane trafficking and in homotypic early endosome fusion. Participates in arteriogenesis by regulating vascular endothelial growth factor receptor 2/VEGFR2 cell surface expression and endosomal trafficking. By interacting with SDCCAG8, localizes to centrosomes and plays a critical role in ciliogenesis. In Homo sapiens (Human), this protein is Rab GTPase-binding effector protein 2 (RABEP2).